The following is a 182-amino-acid chain: ATP-dependent protease subunit HslV (182 aa).

Residue threonine 7 is part of the active site. Na(+) is bound by residues glycine 162, cysteine 165, and threonine 168.

The protein belongs to the peptidase T1B family. HslV subfamily. As to quaternary structure, a double ring-shaped homohexamer of HslV is capped on each side by a ring-shaped HslU homohexamer. The assembly of the HslU/HslV complex is dependent on binding of ATP.

The protein localises to the cytoplasm. It carries out the reaction ATP-dependent cleavage of peptide bonds with broad specificity.. With respect to regulation, allosterically activated by HslU binding. In terms of biological role, protease subunit of a proteasome-like degradation complex believed to be a general protein degrading machinery. The sequence is that of ATP-dependent protease subunit HslV from Legionella pneumophila (strain Lens).